Reading from the N-terminus, the 118-residue chain is Large ribosomal subunit protein uL18 (118 aa).

Belongs to the universal ribosomal protein uL18 family. Part of the 50S ribosomal subunit; part of the 5S rRNA/L5/L18/L25 subcomplex. Contacts the 5S and 23S rRNAs.

Its function is as follows. This is one of the proteins that bind and probably mediate the attachment of the 5S RNA into the large ribosomal subunit, where it forms part of the central protuberance. In Ralstonia pickettii (strain 12J), this protein is Large ribosomal subunit protein uL18.